The chain runs to 468 residues: 6-phosphogluconate dehydrogenase, decarboxylating (468 aa).

Residues 10–15, 33–35, 74–76, and asparagine 102 contribute to the NADP(+) site; these read GMAVMG, NRS, and IKS. Substrate is bound by residues asparagine 102 and 128-130; that span reads SGG. The Proton acceptor role is filled by lysine 182. 185 to 186 serves as a coordination point for substrate; the sequence is HN. Glutamate 189 functions as the Proton donor in the catalytic mechanism. Residues tyrosine 190, lysine 259, arginine 286, arginine 445, and histidine 451 each contribute to the substrate site.

Belongs to the 6-phosphogluconate dehydrogenase family. As to quaternary structure, homodimer.

The catalysed reaction is 6-phospho-D-gluconate + NADP(+) = D-ribulose 5-phosphate + CO2 + NADPH. The protein operates within carbohydrate degradation; pentose phosphate pathway; D-ribulose 5-phosphate from D-glucose 6-phosphate (oxidative stage): step 3/3. Catalyzes the oxidative decarboxylation of 6-phosphogluconate to ribulose 5-phosphate and CO(2), with concomitant reduction of NADP to NADPH. The sequence is that of 6-phosphogluconate dehydrogenase, decarboxylating (gnd) from Buchnera aphidicola subsp. Baizongia pistaciae (strain Bp).